Consider the following 878-residue polypeptide: Phosphoenolpyruvate carboxylase (878 aa).

Catalysis depends on residues His137 and Lys545.

Belongs to the PEPCase type 1 family. Requires Mg(2+) as cofactor.

It catalyses the reaction oxaloacetate + phosphate = phosphoenolpyruvate + hydrogencarbonate. In terms of biological role, forms oxaloacetate, a four-carbon dicarboxylic acid source for the tricarboxylic acid cycle. The sequence is that of Phosphoenolpyruvate carboxylase from Yersinia pestis bv. Antiqua (strain Antiqua).